A 773-amino-acid chain; its full sequence is Ethylene receptor 2 (773 aa).

4 helical membrane-spanning segments follow: residues 4-24, 53-73, 82-102, and 122-142; these read EIAS…VLAI, VSDF…LYFV, WVLF…LLHG, and LTAL…PLLL. Residues Cys94 and His98 each contribute to the Cu cation site. The 145-residue stretch at 187–331 folds into the GAF domain; it reads DRHTILYTTL…VVADQVTVAL (145 aa). A Histidine kinase domain is found at 374–614; that stretch reads TMSEGMRRPM…PETMSLLLRF (241 aa). A Response regulatory domain is found at 647-766; it reads QVLLVDTNDS…AMESELRRVL (120 aa). Asp702 carries the post-translational modification 4-aspartylphosphate. Lys751 participates in a covalent cross-link: Glycyl lysine isopeptide (Lys-Gly) (interchain with G-Cter in ubiquitin).

It belongs to the ethylene receptor family. Heteromer with ETR1. Binds to MRF3/ECIP1. Requires Cu cation as cofactor. Autophosphorylated predominantly on Ser residues. In terms of tissue distribution, expressed in seedlings, roots, leaves, flowers, mature siliques, shoot apical meristems, leaf primordia, inflorescence meristems, young floral meristems, developing petals, carpels and ovules. Low expression in stamens.

It localises to the endoplasmic reticulum membrane. In terms of biological role, ethylene receptor related to bacterial two-component regulators. Acts as a redundant negative regulator of ethylene signaling. This Arabidopsis thaliana (Mouse-ear cress) protein is Ethylene receptor 2.